The sequence spans 122 residues: MAVDGQSNKRRKAERRGHAAEYWAALYLLLKGYRILAIRYRTRLGEIDLIARKKDLIAIIEVKARASGGSAVDAVGFHSQQRIRAAADLWLSRRRDAGRFSLRFDIVAVLPRRLPQHFIDAF.

This sequence belongs to the UPF0102 family.

The chain is UPF0102 protein Atu0303 from Agrobacterium fabrum (strain C58 / ATCC 33970) (Agrobacterium tumefaciens (strain C58)).